The following is a 371-amino-acid chain: T-cell acute lymphocytic leukemia protein 1 (371 aa).

A disordered region spans residues 1–71; the sequence is MMEKRQPELC…DVPLQNSSNG (71 aa). Over residues 34 to 57 the composition is skewed to basic and acidic residues; that stretch reads GCKEDEESKREEGDKEGGGRFKGD. One can recognise a bHLH domain in the interval 204 to 256; the sequence is VRRIFTNSRERWRQQNVNGAFAELRKLIPTHPPDKKLSKNEILRLAMKYISFL. A disordered region spans residues 263-371; sequence QDGGRNVSST…GRPLDGSSRR (109 aa). Positions 293 to 305 are enriched in basic and acidic residues; the sequence is HQDRVVGLARDDI. Residues 321 to 335 are compositionally biased toward acidic residues; the sequence is GDADGSPESFMEDQD.

In terms of tissue distribution, expressed in the main hemopoietic organs in adults, namely the kidney and the spleen. Also expressed in the liver, brain, gill and gonads.

Its subcellular location is the nucleus. In terms of biological role, transcription factor that plays a pivotal role in hemopoietic and endothelial development. This Takifugu rubripes (Japanese pufferfish) protein is T-cell acute lymphocytic leukemia protein 1.